Consider the following 109-residue polypeptide: Cell cycle protein GpsB (109 aa).

A coiled-coil region spans residues 36-63 (IKDYETYAALVKSLRQEIADLKEELTRK).

It belongs to the GpsB family. As to quaternary structure, forms polymers through the coiled coil domains. Interacts with PBP1, MreC and EzrA.

It localises to the cytoplasm. Divisome component that associates with the complex late in its assembly, after the Z-ring is formed, and is dependent on DivIC and PBP2B for its recruitment to the divisome. Together with EzrA, is a key component of the system that regulates PBP1 localization during cell cycle progression. Its main role could be the removal of PBP1 from the cell pole after pole maturation is completed. Also contributes to the recruitment of PBP1 to the division complex. Not essential for septum formation. The polypeptide is Cell cycle protein GpsB (Streptococcus pneumoniae serotype 4 (strain ATCC BAA-334 / TIGR4)).